Reading from the N-terminus, the 574-residue chain is MRASRYLIATLKETPADAEVISHQLMLRAGMIRKLAAGLYTWLPLGLRVLKKVENIVREEMDRSGAQEVLMPAVQPAELWIESGRWEQYGGELLRIHDRHNRDFCVGPTHEEVITDLIRNELKSYKQLPANFYQIQMKFRDERRPRFGIMRAREFLMKDAYSFHVNQESLDETYMVMYDAYTRIFTRFGLDFRPVQADSGSIGGSSSHEFHVLANSGEDLIAFSTESDYAANLEKAEALTTLKQAPAPSKDMAKVATPGQRTIESVSEFLNLPAEQTVKTLLVLGEAEEGKPAPIIALVLRGDHVLNEIKAEKLPGVASPLTFASDEAIEAAVGCKPGSIGPVNLPLRTIVDNSAAVLANFVCGANEEGQHLTGVNWGRDCEIKETADLRNVVEGDLSPDGKGVLVLKKGIEVGHVFKLGDKYSSAMNATVLDENGKATVMQMGCYGIGVSRVVAAAIEQGHDDKGIIWPDALAPFEVALVPLNMHKSDVVREKAESLYAELLQAGVDVLLDDRNERPGVKFAEMELIGIPHRVVISDRGLAEGKVEYKGRRDTDSTDMTVDTVVNFIKEKLKK.

Belongs to the class-II aminoacyl-tRNA synthetase family. ProS type 1 subfamily. As to quaternary structure, homodimer.

Its subcellular location is the cytoplasm. The enzyme catalyses tRNA(Pro) + L-proline + ATP = L-prolyl-tRNA(Pro) + AMP + diphosphate. Functionally, catalyzes the attachment of proline to tRNA(Pro) in a two-step reaction: proline is first activated by ATP to form Pro-AMP and then transferred to the acceptor end of tRNA(Pro). As ProRS can inadvertently accommodate and process non-cognate amino acids such as alanine and cysteine, to avoid such errors it has two additional distinct editing activities against alanine. One activity is designated as 'pretransfer' editing and involves the tRNA(Pro)-independent hydrolysis of activated Ala-AMP. The other activity is designated 'posttransfer' editing and involves deacylation of mischarged Ala-tRNA(Pro). The misacylated Cys-tRNA(Pro) is not edited by ProRS. The sequence is that of Proline--tRNA ligase from Hahella chejuensis (strain KCTC 2396).